A 404-amino-acid polypeptide reads, in one-letter code: Cytochrome b561 and DOMON domain-containing protein At2g04850 (404 aa).

Residues 1–22 (MATLILSFLLLLLATKLPESLA) form the signal peptide. A DOMON domain is found at 43–173 (QQASIAWTYH…TKIHHVWNRG (131 aa)). A Cytochrome b561 domain is found at 180 to 380 (SPTIHPTTST…MEVNSWVVFC (201 aa)). The chain crosses the membrane as a helical span at residues 217–237 (VTHGVVNAISWGFLLPAGAVT). Residues H219 and H255 each coordinate heme b. Residues 256 to 276 (AAIQLTGFLLGTIGFSIGIVL) form a helical membrane-spanning segment. H288 contributes to the heme b binding site. A helical membrane pass occupies residues 290–310 (SLGIATFTAAALQTLALLFRP). Heme b is bound at residue H324. 2 helical membrane-spanning segments follow: residues 326-346 (FVGY…FEVL) and 359-379 (LCLS…WVVF).

Requires heme b as cofactor.

Its subcellular location is the membrane. Functionally, may act as a catecholamine-responsive trans-membrane electron transporter. In Arabidopsis thaliana (Mouse-ear cress), this protein is Cytochrome b561 and DOMON domain-containing protein At2g04850.